The following is a 197-amino-acid chain: ATP-dependent Clp protease proteolytic subunit (197 aa).

Residue Ser-102 is the Nucleophile of the active site. The active site involves His-127.

Belongs to the peptidase S14 family. Fourteen ClpP subunits assemble into 2 heptameric rings which stack back to back to give a disk-like structure with a central cavity, resembling the structure of eukaryotic proteasomes.

It localises to the cytoplasm. The catalysed reaction is Hydrolysis of proteins to small peptides in the presence of ATP and magnesium. alpha-casein is the usual test substrate. In the absence of ATP, only oligopeptides shorter than five residues are hydrolyzed (such as succinyl-Leu-Tyr-|-NHMec, and Leu-Tyr-Leu-|-Tyr-Trp, in which cleavage of the -Tyr-|-Leu- and -Tyr-|-Trp bonds also occurs).. In terms of biological role, cleaves peptides in various proteins in a process that requires ATP hydrolysis. Has a chymotrypsin-like activity. Plays a major role in the degradation of misfolded proteins. The sequence is that of ATP-dependent Clp protease proteolytic subunit from Buchnera aphidicola subsp. Schizaphis graminum (strain Sg).